We begin with the raw amino-acid sequence, 208 residues long: Negative modulator of initiation of replication (208 aa).

The segment at 115 to 116 is interaction with DNA; it reads AV.

This sequence belongs to the SeqA family. In terms of assembly, homodimer. Polymerizes to form helical filaments.

It localises to the cytoplasm. Functionally, negative regulator of replication initiation, which contributes to regulation of DNA replication and ensures that replication initiation occurs exactly once per chromosome per cell cycle. Binds to pairs of hemimethylated GATC sequences in the oriC region, thus preventing assembly of replication proteins and re-initiation at newly replicated origins. Repression is relieved when the region becomes fully methylated. The sequence is that of Negative modulator of initiation of replication from Shewanella frigidimarina (strain NCIMB 400).